The sequence spans 550 residues: Silent protein UshA(0) (550 aa).

Positions 1–25 are cleaved as a signal peptide; it reads MKFLKRGVALALLAAFALTTQPAQA. A divalent metal cation-binding residues include D41, H43, D84, N116, H217, H252, and Q254. C258 and C275 form a disulfide bridge. Substrate contacts are provided by residues F429 and 498 to 504; that span reads FNATGGD.

Belongs to the 5'-nucleotidase family. A divalent metal cation is required as a cofactor.

The protein resides in the periplasm. This chain is Silent protein UshA(0) (ushA), found in Salmonella typhimurium (strain LT2 / SGSC1412 / ATCC 700720).